We begin with the raw amino-acid sequence, 61 residues long: MAGKTLKVTQIGSPIRRTADQRATLIGLGLNKMHRTRELQDTPEVRGMIRKVQHMVKVDEA.

It belongs to the universal ribosomal protein uL30 family. Part of the 50S ribosomal subunit.

The polypeptide is Large ribosomal subunit protein uL30 (Rhizorhabdus wittichii (strain DSM 6014 / CCUG 31198 / JCM 15750 / NBRC 105917 / EY 4224 / RW1) (Sphingomonas wittichii)).